The following is a 133-amino-acid chain: UPF0102 protein Anae109_1947 (133 aa).

Belongs to the UPF0102 family.

This is UPF0102 protein Anae109_1947 from Anaeromyxobacter sp. (strain Fw109-5).